The following is a 204-amino-acid chain: Large ribosomal subunit protein eL15y (204 aa).

The protein belongs to the eukaryotic ribosomal protein eL15 family.

This is Large ribosomal subunit protein eL15y (SB62) from Picea mariana (Black spruce).